The primary structure comprises 33 residues: Alpha-amanitin proprotein (33 aa).

Residues 1–10 (MSDINATRLP) constitute a propeptide that is removed on maturation. At isoleucine 11 the chain carries (3R,4R)-4,5-dihydroxyisoleucine; in form alpha-amanitin. Isoleucine 11 carries the post-translational modification (3R,4S)-4-hydroxyisoleucine; in form gamma-amanitin. Positions 11-18 (IWGIGCNP) form a cross-link, cyclopeptide (Ile-Pro). The 2'-cysteinyl-6'-hydroxytryptophan sulfoxide (Trp-Cys) cross-link spans 12–16 (WGIGC). Proline 18 is subject to 4-hydroxyproline. Residues 19-33 (CVGDEVTALITRGEA) constitute a propeptide that is removed on maturation.

The protein belongs to the MSDIN fungal toxin family. Processed by the macrocyclase-peptidase enzyme POPB to yield a toxic cyclic decapeptide. POPB first removes 10 residues from the N-terminus. Conformational trapping of the remaining peptide forces the enzyme to release this intermediate rather than proceed to macrocyclization. The enzyme rebinds the remaining peptide in a different conformation and catalyzes macrocyclization of the N-terminal 8 residues.

Major toxin belonging to the bicyclic octapeptides amatoxins that acts by binding non-competitively to RNA polymerase II and greatly slowing the elongation of transcripts from target promoters. The sequence is that of Alpha-amanitin proprotein from Amanita pallidorosea.